Consider the following 103-residue polypeptide: Protein S100-A16 (103 aa).

The 36-residue stretch at 12–47 folds into the EF-hand 1; degenerate domain; sequence VIVLVENFYKYVSKYSLVKNKISKSSFREMLQKELN. In terms of domain architecture, EF-hand 2 spans 54-89; sequence GNRKAADKLIQNLDANHDGRISFDEYWTLIGGITGP. Positions 67, 69, 71, 73, and 78 each coordinate Ca(2+).

Belongs to the S-100 family. Homodimer. Interacts with TP53. As to expression, ubiquitous. Highly expressed in esophagus, adipose tissues and colon. Expressed at lower level in lung, brain, pancreas and skeletal muscle. Expression is up-regulated in tumors of bladder, lung, thyroid gland, pancreas and ovary. Expressed in astrocytes.

It is found in the nucleus. It localises to the nucleolus. The protein resides in the cytoplasm. Functionally, calcium-binding protein. Binds one calcium ion per monomer. Can promote differentiation of adipocytes (in vitro). Overexpression in preadipocytes increases their proliferation, enhances adipogenesis and reduces insulin-stimulated glucose uptake. The chain is Protein S100-A16 from Homo sapiens (Human).